The chain runs to 562 residues: Protoporphyrinogen oxidase 1, chloroplastic (562 aa).

The N-terminal 48 residues, 1 to 48 (MSAMALSSTMALSLPQSSMSLSHCRHNRITILIPSSSLRRRGGSSIRC), are a transit peptide targeting the chloroplast. Residues 88–93 (GGGISG), 115–116 (EA), and 137–140 (GPNS) contribute to the FAD site. The interval 274–302 (TLKTIQERKDNPKPPRDPRLPKPKGQTVG) is disordered. Basic and acidic residues predominate over residues 278–293 (IQERKDNPKPPRDPRL). FAD is bound by residues valine 323 and 536–538 (VAL).

Belongs to the protoporphyrinogen/coproporphyrinogen oxidase family. Protoporphyrinogen oxidase subfamily. Requires FAD as cofactor.

The protein localises to the plastid. Its subcellular location is the chloroplast thylakoid membrane. The protein resides in the chloroplast inner membrane. It catalyses the reaction protoporphyrinogen IX + 3 O2 = protoporphyrin IX + 3 H2O2. Its pathway is porphyrin-containing compound metabolism; protoporphyrin-IX biosynthesis; protoporphyrin-IX from protoporphyrinogen-IX: step 1/1. It participates in porphyrin-containing compound metabolism; chlorophyll biosynthesis. Catalyzes the 6-electron oxidation of protoporphyrinogen-IX to form protoporphyrin-IX. The protein is Protoporphyrinogen oxidase 1, chloroplastic of Spinacia oleracea (Spinach).